The chain runs to 161 residues: Early E3 17.7 kDa glycoprotein (161 aa).

2 N-linked (GlcNAc...) asparagine; by host glycosylation sites follow: Asn14 and Asn87. A helical membrane pass occupies residues 102 to 129 (IINPAIFLFLHVLTLVIVLAMAAEVIYN).

It is found in the host membrane. In Murine adenovirus A serotype 1 (MAdV-1), this protein is Early E3 17.7 kDa glycoprotein.